We begin with the raw amino-acid sequence, 783 residues long: Endonuclease MutS2 (783 aa).

328-335 (GPNTGGKT) is a binding site for ATP. Residues 708-783 (LDLRGKRYEE…GSGCTIATLG (76 aa)) form the Smr domain.

Belongs to the DNA mismatch repair MutS family. MutS2 subfamily. As to quaternary structure, homodimer. Binds to stalled ribosomes, contacting rRNA.

Endonuclease that is involved in the suppression of homologous recombination and thus may have a key role in the control of bacterial genetic diversity. Functionally, acts as a ribosome collision sensor, splitting the ribosome into its 2 subunits. Detects stalled/collided 70S ribosomes which it binds and splits by an ATP-hydrolysis driven conformational change. Acts upstream of the ribosome quality control system (RQC), a ribosome-associated complex that mediates the extraction of incompletely synthesized nascent chains from stalled ribosomes and their subsequent degradation. Probably generates substrates for RQC. The chain is Endonuclease MutS2 from Streptococcus thermophilus (strain ATCC BAA-250 / LMG 18311).